Here is a 172-residue protein sequence, read N- to C-terminus: Adenine phosphoribosyltransferase (172 aa).

The protein belongs to the purine/pyrimidine phosphoribosyltransferase family. In terms of assembly, homodimer.

It is found in the cytoplasm. The catalysed reaction is AMP + diphosphate = 5-phospho-alpha-D-ribose 1-diphosphate + adenine. Its pathway is purine metabolism; AMP biosynthesis via salvage pathway; AMP from adenine: step 1/1. Catalyzes a salvage reaction resulting in the formation of AMP, that is energically less costly than de novo synthesis. The chain is Adenine phosphoribosyltransferase from Prochlorococcus marinus (strain NATL1A).